A 264-amino-acid polypeptide reads, in one-letter code: Indole-3-glycerol phosphate synthase (264 aa).

The protein belongs to the TrpC family.

It carries out the reaction 1-(2-carboxyphenylamino)-1-deoxy-D-ribulose 5-phosphate + H(+) = (1S,2R)-1-C-(indol-3-yl)glycerol 3-phosphate + CO2 + H2O. Its pathway is amino-acid biosynthesis; L-tryptophan biosynthesis; L-tryptophan from chorismate: step 4/5. The protein is Indole-3-glycerol phosphate synthase of Xylella fastidiosa (strain M12).